The sequence spans 360 residues: Phosphoserine aminotransferase (360 aa).

Arginine 42 serves as a coordination point for L-glutamate. Residues 76–77 (AR), tryptophan 102, threonine 152, aspartate 172, and glutamine 195 each bind pyridoxal 5'-phosphate. At lysine 196 the chain carries N6-(pyridoxal phosphate)lysine. Pyridoxal 5'-phosphate is bound at residue 237-238 (NT).

Belongs to the class-V pyridoxal-phosphate-dependent aminotransferase family. SerC subfamily. Homodimer. Requires pyridoxal 5'-phosphate as cofactor.

The protein resides in the cytoplasm. The catalysed reaction is O-phospho-L-serine + 2-oxoglutarate = 3-phosphooxypyruvate + L-glutamate. It carries out the reaction 4-(phosphooxy)-L-threonine + 2-oxoglutarate = (R)-3-hydroxy-2-oxo-4-phosphooxybutanoate + L-glutamate. Its pathway is amino-acid biosynthesis; L-serine biosynthesis; L-serine from 3-phospho-D-glycerate: step 2/3. It participates in cofactor biosynthesis; pyridoxine 5'-phosphate biosynthesis; pyridoxine 5'-phosphate from D-erythrose 4-phosphate: step 3/5. Catalyzes the reversible conversion of 3-phosphohydroxypyruvate to phosphoserine and of 3-hydroxy-2-oxo-4-phosphonooxybutanoate to phosphohydroxythreonine. This chain is Phosphoserine aminotransferase, found in Pasteurella multocida (strain Pm70).